We begin with the raw amino-acid sequence, 249 residues long: MSETTGPSIDRDEVARFERIAATWWDEAGPMRVLHRFNPVRITYIRDTVCRHFGRDPRRPLPLEALSLIDIGCGGGILSEPLARLGATVTGLDPAPTNIRVAQAHAAEAGVPVDYRGQTIEAVVEAGERFDVVLAMEVVEHVVDMPAFVRTACAAVKPGGLFFAATLNRTMRSFALAIVGAEYVLGWLPRGTHDWEKFVTPAELTGAVESAGLTVIDTTGVVYNPLGGRWAMSRDTGVNYMIAAERPVA.

Residues Arg-41, Gly-72, Asp-93, and Met-136 each coordinate S-adenosyl-L-methionine.

The protein belongs to the methyltransferase superfamily. UbiG/COQ3 family.

The enzyme catalyses a 3-demethylubiquinol + S-adenosyl-L-methionine = a ubiquinol + S-adenosyl-L-homocysteine + H(+). The catalysed reaction is a 3-(all-trans-polyprenyl)benzene-1,2-diol + S-adenosyl-L-methionine = a 2-methoxy-6-(all-trans-polyprenyl)phenol + S-adenosyl-L-homocysteine + H(+). The protein operates within cofactor biosynthesis; ubiquinone biosynthesis. O-methyltransferase that catalyzes the 2 O-methylation steps in the ubiquinone biosynthetic pathway. The protein is Ubiquinone biosynthesis O-methyltransferase of Methylobacterium nodulans (strain LMG 21967 / CNCM I-2342 / ORS 2060).